Consider the following 464-residue polypeptide: Cysteine--tRNA ligase (464 aa).

Residue cysteine 30 coordinates Zn(2+). The short motif at 32–42 is the 'HIGH' region element; that stretch reads MTVYDYCHIGH. Residues cysteine 214, histidine 239, and glutamate 243 each contribute to the Zn(2+) site. Residues 271–275 carry the 'KMSKS' region motif; sequence KMSKS. Lysine 274 is a binding site for ATP.

The protein belongs to the class-I aminoacyl-tRNA synthetase family. In terms of assembly, monomer. The cofactor is Zn(2+).

Its subcellular location is the cytoplasm. It carries out the reaction tRNA(Cys) + L-cysteine + ATP = L-cysteinyl-tRNA(Cys) + AMP + diphosphate. The chain is Cysteine--tRNA ligase from Janthinobacterium sp. (strain Marseille) (Minibacterium massiliensis).